A 528-amino-acid chain; its full sequence is GMP synthase [glutamine-hydrolyzing] (528 aa).

Positions 13–204 (AIVILDFGSQ…VYHICGCEPD (192 aa)) constitute a Glutamine amidotransferase type-1 domain. Catalysis depends on Cys-90, which acts as the Nucleophile. Active-site residues include His-178 and Glu-180. The 199-residue stretch at 205 to 403 (WTTSAFIDEA…LGLPEEIVRR (199 aa)) folds into the GMPS ATP-PPase domain. 232–238 (SGGVDSS) is a binding site for ATP.

As to quaternary structure, homodimer.

The enzyme catalyses XMP + L-glutamine + ATP + H2O = GMP + L-glutamate + AMP + diphosphate + 2 H(+). Its pathway is purine metabolism; GMP biosynthesis; GMP from XMP (L-Gln route): step 1/1. Its function is as follows. Catalyzes the synthesis of GMP from XMP. The polypeptide is GMP synthase [glutamine-hydrolyzing] (Parasynechococcus marenigrum (strain WH8102)).